A 130-amino-acid polypeptide reads, in one-letter code: Small ribosomal subunit protein uS11 (130 aa).

This sequence belongs to the universal ribosomal protein uS11 family. In terms of assembly, part of the 30S ribosomal subunit. Interacts with proteins S7 and S18. Binds to IF-3.

In terms of biological role, located on the platform of the 30S subunit, it bridges several disparate RNA helices of the 16S rRNA. Forms part of the Shine-Dalgarno cleft in the 70S ribosome. The protein is Small ribosomal subunit protein uS11 of Dehalococcoides mccartyi (strain ATCC BAA-2266 / KCTC 15142 / 195) (Dehalococcoides ethenogenes (strain 195)).